The primary structure comprises 196 residues: Pentatricopeptide repeat-containing protein At1g62350 (196 aa).

PPR repeat units lie at residues 70–104 (DMFF…EVLF) and 105–139 (DQHT…PDRP).

Belongs to the PPR family. P subfamily.

In Arabidopsis thaliana (Mouse-ear cress), this protein is Pentatricopeptide repeat-containing protein At1g62350.